Reading from the N-terminus, the 365-residue chain is c-di-GMP synthase (365 aa).

It belongs to the CD-NTase family. E subfamily.

It catalyses the reaction 2 GTP = 3',3'-c-di-GMP + 2 diphosphate. Cyclic nucleotide synthase (second messenger synthase) of a CBASS antivirus system. CBASS (cyclic oligonucleotide-based antiphage signaling system) provides immunity against bacteriophage. The CD-NTase protein synthesizes cyclic nucleotides in response to infection; these serve as specific second messenger signals. The signals activate a diverse range of effectors, leading to bacterial cell death and thus abortive phage infection. A type I-D(GG) CBASS system. Functionally, cyclic dinucleotide synthase that catalyzes the synthesis of c-di-GMP, has no activity with other NTP substrates. This chain is c-di-GMP synthase, found in Flavobacteriaceae sp. genome_bin_11.